We begin with the raw amino-acid sequence, 4588 residues long: MGRHLALLLLLLLLFQHFGDSDGSQRLEQTPLQFTHLEYNVTVQENSAAKTYVGHPVKMGVYITHPAWEVRYKIVSGDSENLFKAEEYILGDFCFLRIRTKGGNTAILNREVKDHYTLIVKALEKNTNVEARTKVRVQVLDTNDLRPLFSPTSYSVSLPENTAIRTSIARVSATDADIGTNGEFYYSFKDRTDMFAIHPTSGVIVLTGRLDYLETKLYEMEILAADRGMKLYGSSGISSMAKLTVHIEQANECAPVITAVTLSPSELDRDPAYAIVTVDDCDQGANGDIASLSIVAGDLLQQFRTVRSFPGSKEYKVKAIGGIDWDSHPFGYNLTLQAKDKGTPPQFSSVKVIHVTSPQFKAGPVKFEKDVYRAEISEFAPPNTPVVMVKAIPAYSHLRYVFKSTPGKAKFSLNYNTGLISILEPVKRQQAAHFELEVTTSDRKASTKVLVKVLGANSNPPEFTQTAYKAAFDENVPIGTTVMSLSAVDPDEGENGYVTYSIANLNHVPFAIDHFTGAVSTSENLDYELMPRVYTLRIRASDWGLPYRREVEVLATITLNNLNDNTPLFEKINCEGTIPRDLGVGEQITTVSAIDADELQLVQYQIEAGNELDFFSLNPNSGVLSLKRSLMDGLGAKVSFHSLRITATDGENFATPLYINITVAASHKLVNLQCEETGVAKMLAEKLLQANKLHNQGEVEDIFFDSHSVNAHIPQFRSTLPTGIQVKENQPVGSSVIFMNSTDLDTGFNGKLVYAVSGGNEDSCFMIDMETGMLKILSPLDRETTDKYTLNITVYDLGIPQKAAWRLLHVVVVDANDNPPEFLQESYFVEVSEDKEVHSEIIQVEATDKDLGPNGHVTYSIVTDTDTFSIDSVTGVVNIARPLDRELQHEHSLKIEARDQAREEPQLFSTVVVKVSLEDVNDNPPTFIPPNYRVKVREDLPEGTVIMWLEAHDPDLGQSGQVRYSLLDHGEGNFDVDKLSGAVRIVQQLDFEKKQVYNLTVRAKDKGKPVSLSSTCYVEVEVVDVNENLHPPVFSSFVEKGTVKEDAPVGSLVMTVSAHDEDARRDGEIRYSIRDGSGVGVFKIGEETGVIETSDRLDRESTSHYWLTVFATDQGVVPLSSFIEIYIEVEDVNDNAPQTSEPVYYPEIMENSPKDVSVVQIEAFDPDSSSNDKLMYKITSGNPQGFFSIHPKTGLITTTSRKLDREQQDEHILEVTVTDNGSPPKSTIARVIVKILDENDNKPQFLQKFYKIRLPEREKPDRERNARREPLYHVIATDKDEGPNAEISYSIEDGNEHGKFFIEPKTGVVSSKRFSAAGEYDILSIKAVDNGRPQKSSTTRLHIEWISKPKPSLEPISFEESFFTFTVMESDPVAHMIGVISVEPPGIPLWFDITGGNYDSHFDVDKGTGTIIVAKPLDAEQKSNYNLTVEATDGTTTILTQVFIKVIDTNDHRPQFSTSKYEVVIPEDTAPETEILQISAVDQDEKNKLIYTLQSSRDPLSLKKFRLDPATGSLYTSEKLDHEAVHQHTLTVMVRDQDVPVKRNFARIVVNVSDTNDHAPWFTASSYKGRVYESAAVGSVVLQVTALDKDKGKNAEVLYSIESGNIGNSFMIDPVLGSIKTAKELDRSNQAEYDLMVKATDKGSPPMSEITSVRIFVTIADNASPKFTSKEYSVELSETVSIGSFVGMVTAHSQSSVVYEIKDGNTGDAFDINPHSGTIITQKALDFETLPIYTLIIQGTNMAGLSTNTTVLVHLQDENDNAPVFMQAEYTGLISESASINSVVLTDRNVPLVIRAADADKDSNALLVYHIVEPSVHTYFAIDSSTGAIHTVLSLDYEETSIFHFTVQVHDMGTPRLFAEYAANVTVHVIDINDCPPVFAKPLYEASLLLPTYKGVKVITVNATDADSSAFSQLIYSITEGNIGEKFSMDYKTGALTVQNTTQLRSRYELTVRASDGRFAGLTSVKINVKESKESHLKFTQDVYSAVVKENSTEAETLAVITAIGNPINEPLFYHILNPDRRFKISRTSGVLSTTGTPFDREQQEAFDVVVEVTEEHKPSAVAHVVVKVIVEDQNDNAPVFVNLPYYAVVKVDTEVGHVIRYVTAVDRDSGRNGEVHYYLKEHHEHFQIGPLGEISLKKQFELDTLNKEYLVTVVAKDGGNPAFSAEVIVPITVMNKAMPVFEKPFYSAEIAESIQVHSPVVHVQANSPEGLKVFYSITDGDPFSQFTINFNTGVINVIAPLDFEAHPAYKLSIRATDSLTGAHAEVFVDIIVDDINDNPPVFAQQSYAVTLSEASVIGTSVVQVRATDSDSEPNRGISYQMFGNHSKSHDHFHVDSSTGLISLLRTLDYEQSRQHTIFVRAVDGGMPTLSSDVIVTVDVTDLNDNPPLFEQQIYEARISEHAPHGHFVTCVKAYDADSSDIDKLQYSILSGNDHKHFVIDSATGIITLSNLHRHALKPFYSLNLSVSDGVFRSSTQVHVTVIGGNLHSPAFLQNEYEVELAENAPLHTLVMEVKTTDGDSGIYGHVTYHIVNDFAKDRFYINERGQIFTLEKLDRETPAEKVISVRLMAKDAGGKVAFCTVNVILTDDNDNAPQFRATKYEVNIGSSAAKGTSVVKVLASDADEGSNADITYAIEADSESVKENLEINKLSGVITTKESLIGLENEFFTFFVRAVDNGSPSKESVVLVYVKILPPEMQLPKFSEPFYTFTVSEDVPIGTEIDLIRAEHSGTVLYSLVKGNTPESNRDESFVIDRQSGRLKLEKSLDHETTKWYQFSILARCTQDDHEMVASVDVSIQVKDANDNSPVFESSPYEAFIVENLPGGSRVIQIRASDADSGTNGQVMYSLDQSQSVEVIESFAINMETGWITTLKELDHEKRDNYQIKVVASDHGEKIQLSSTAIVDVTVTDVNDSPPRFTAEIYKGTVSEDDPQGGVIAILSTTDADSEEINRQVTYFITGGDPLGQFAVETIQNEWKVYVKKPLDREKRDNYLLTITATDGTFSSKAIVEVKVLDANDNSPVCEKTLYSDTIPEDVLPGKLIMQISATDADIRSNAEITYTLLGSGAEKFKLNPDTGELKTSTPLDREEQAVYHLLVRATDGGGRFCQASIVLTLEDVNDNAPEFSADPYAITVFENTEPGTLLTRVQATDADAGLNRKILYSLIDSADGQFSINELSGIIQLEKPLDRELQAVYTLSLKAVDQGLPRRLTATGTVIVSVLDINDNPPVFEYREYGATVSEDILVGTEVLQVYAASRDIEANAEITYSIISGNEHGKFSIDSKTGAVFIIENLDYESSHEYYLTVEATDGGTPSLSDVATVNVNVTDINDNTPVFSQDTYTTVISEDAVLEQSVITVMADDADGPSNSHIHYSIIDGNQGSSFTIDPVRGEVKVTKLLDRETISGYTLTVQASDNGSPPRVNTTTVNIDVSDVNDNAPVFSRGNYSVIIQENKPVGFSVLQLVVTDEDSSHNGPPFFFTIVTGNDEKAFEVNPQGVLLTSSAIKRKEKDHYLLQVKVADNGKPQLSSLTYIDIRVIEESIYPPAILPLEIFITSSGEEYSGGVIGKIHATDQDVYDTLTYSLDPQMDNLFSVSSTGGKLIAHKKLDIGQYLLNVSVTDGKFTTVADITVHIRQVTQEMLNHTIAIRFANLTPEEFVGDYWRNFQRALRNILGVRRNDIQIVSLQSSEPHPHLDVLLFVEKPGSAQISTKQLLHKINSSVTDIEEIIGVRILNVFQKLCAGLDCPWKFCDEKVSVDESVMSTHSTARLSFVTPRHHRAAVCLCKEGRCPPVHHGCEDDPCPEGSECVSDPWEEKHTCVCPSGRFGQCPGSSSMTLTGNSYVKYRLTENENKLEMKLTMRLRTYSTHAVVMYARGTDYSILEIHHGRLQYKFDCGSGPGIVSVQSIQVNDGQWHAVALEVNGNYARLVLDQVHTASGTAPGTLKTLNLDNYVFFGGHIRQQGTRHGRSPQVGNGFRGCMDSIYLNGQELPLNSKPRSYAHIEESVDVSPGCFLTATEDCASNPCQNGGVCNPSPAGGYYCKCSALYIGTHCEISVNPCSSKPCLYGGTCVVDNGGFVCQCRGLYTGQRCQLSPYCKDEPCKNGGTCFDSLDGAVCQCDSGFRGERCQSDIDECSGNPCLHGALCENTHGSYHCNCSHEYRGRHCEDAAPNQYVSTPWNIGLAEGIGIVVFVAGIFLLVVVFVLCRKMISRKKKHQAEPKDKHLGPATAFLQRPYFDSKLNKNIYSDIPPQVPVRPISYTPSIPSDSRNNLDRNSFEGSAIPEHPEFSTFNPESVHGHRKAVAVCSVAPNLPPPPPSNSPSDSDSIQKPSWDFDYDTKVVDLDPCLSKKPLEEKPSQPYSARESLSEVQSLSSFQSESCDDNGYHWDTSDWMPSVPLPDIQEFPNYEVIDEQTPLYSADPNAIDTDYYPGGYDIESDFPPPPEDFPAADELPPLPPEFSNQFESIHPPRDMPAAGSLGSSSRNRQRFNLNQYLPNFYPLDMSEPQTKGTGENSTCREPHAPYPPGYQRHFEAPAVESMPMSVYASTASCSDVSACCEVESEVMMSDYESGDDGHFEEVTIPPLDSQQHTEV.

An N-terminal signal peptide occupies residues 1–21 (MGRHLALLLLLLLLFQHFGDS). The Extracellular portion of the chain corresponds to 22-4181 (DGSQRLEQTP…STPWNIGLAE (4160 aa)). Cadherin domains are found at residues 35–149 (THLE…RPLF) and 150–257 (SPTS…APVI). N-linked (GlcNAc...) asparagine glycosylation occurs at N40. N333 carries N-linked (GlcNAc...) asparagine glycosylation. 31 Cadherin domains span residues 368-463 (EKDV…PPEF), 464-569 (TQTA…TPLF), 570-673 (EKIN…VNLQ), 718-822 (STLP…PPEF), 823-927 (LQES…PPTF), 928-1034 (IPPN…PPVF), 1035-1139 (SSFV…APQT), 1140-1245 (SEPV…KPQF), 1246-1357 (LQKF…EPIS), 1359-1456 (EESF…RPQF), 1457-1562 (STSK…APWF), 1563-1667 (TASS…SPKF), 1668-1765 (TSKE…APVF), 1766-1879 (MQAE…PPVF), 1880-1979 (AKPL…HLKF), 1980-2081 (TQDV…APVF), 2082-2182 (VNLP…MPVF), 2183-2283 (EKPF…PPVF), 2284-2390 (AQQS…PPLF), 2391-2492 (EQQI…SPAF), 2493-2596 (LQNE…APQF), 2597-2703 (RATK…LPKF), 2704-2809 (SEPF…SPVF), 2810-2918 (ESSP…PPRF), 2919-3023 (TAEI…SPVC), 3024-3125 (EKTL…APEF), 3126-3230 (SADP…PPVF), 3231-3335 (EYRE…TPVF), 3336-3440 (SQDT…APVF), 3441-3545 (SRGN…PPAI), and 3546-3647 (LPLE…AIRF). N660, N740, and N791 each carry an N-linked (GlcNAc...) asparagine glycan. N-linked (GlcNAc...) asparagine glycosylation occurs at N998. Residues N1426 and N1551 are each glycosylated (N-linked (GlcNAc...) asparagine). N-linked (GlcNAc...) asparagine glycosylation is found at N1748, N1864, N1902, N1940, and N1991. N2325 and N2464 each carry an N-linked (GlcNAc...) asparagine glycan. N3324, N3422, N3444, N3613, N3640, and N3716 each carry an N-linked (GlcNAc...) asparagine glycan. Residues 3790 to 3827 (VHHGCEDDPCPEGSECVSDPWEEKHTCVCPSGRFGQCP) form the EGF-like 1 domain. 15 disulfides stabilise this stretch: C3794–C3805, C3799–C3816, C3818–C3826, C3976–C4009, C4017–C4028, C4022–C4038, C4040–C4049, C4056–C4067, C4061–C4076, C4078–C4087, C4093–C4104, C4098–C4113, C4115–C4124, C4131–C4142, and C4136–C4151. The Laminin G-like domain occupies 3829–4009 (SSSMTLTGNS…EESVDVSPGC (181 aa)). EGF-like domains follow at residues 4013–4050 (ATED…THCE), 4052–4088 (SVNP…QRCQ), and 4089–4125 (LSPY…ERCQ). Positions 4127-4163 (DIDECSGNPCLHGALCENTHGSYHCNCSHEYRGRHCE) constitute an EGF-like 5; calcium-binding domain. N4152 is a glycosylation site (N-linked (GlcNAc...) asparagine). C4153 and C4162 form a disulfide bridge. Residues 4182 to 4202 (GIGIVVFVAGIFLLVVVFVLC) form a helical membrane-spanning segment. Topologically, residues 4203–4588 (RKMISRKKKH…PLDSQQHTEV (386 aa)) are cytoplasmic. The Nuclear localization signal motif lies at 4204-4214 (KMISRKKKHQA). Disordered regions lie at residues 4255–4275 (SYTP…SFEG), 4303–4327 (SVAP…QKPS), and 4343–4376 (LSKK…SESC). Polar residues predominate over residues 4256-4265 (YTPSIPSDSR). Residues 4363-4374 (SEVQSLSSFQSE) are compositionally biased toward polar residues. Positions 4378 to 4382 (DNGYH) match the PTB-like motif motif. 2 disordered regions span residues 4435–4479 (FPPP…SSSR) and 4565–4588 (ESGD…HTEV).

As to quaternary structure, interacts (via the C-terminus 4300-4400 AA) with ATN1. Interacts with RERE. Undergoes proteolytic cleavage. The extracellular domain is cleaved off and the cytoplasmic domain (about 400 AA) shuttles to the nucleus. Expressed in many epithelial and some endothelial and smooth muscle cells.

The protein resides in the cell membrane. It localises to the nucleus. In terms of biological role, plays an essential role for cellular polarization, directed cell migration and modulating cell-cell contact. This is Protocadherin Fat 1 (FAT1) from Homo sapiens (Human).